Here is a 452-residue protein sequence, read N- to C-terminus: MSLNSASTREHPSEAWKSLAQYLPSRSTDLDYWWQRIGPSAALVLEKAGYSIKSQYDALLFLYHWVVPELGPSLLSTDHKWKSLLQGDGSAFELSWKWNTNDSPPEVRYVVEPINQFSGTLLDPLNSQPSMVFRHRLASILPNIDLTWCHHFAGSLFDHNKARLLREMMPEGHKMPAGYTVPSTLVALEFLQDGQVATKSYFIPRKHGQGVWLPIAQFEESIAELDPVNEARAAVVDFVSKDPESLTPIMLAVDDKDVSSARIKWYFATARTELSWAKEIMTLGGRITTKHLPHLEQQLDDLIELIKAVTGIASEYPQDVELPFAPRFDPSKGAGNFVPLPIPIAGYQVHFNIAPGSEVPGVKLYIPMRRYARDDASVAKGITSFMESRGRNTYIKEYTEMLAGLLPDGKELSSVHCLQTYVSCLFKKNGELEITTYLGMAPYGDNHKPMSI.

The protein belongs to the tryptophan dimethylallyltransferase family.

Its pathway is mycotoxin biosynthesis. Its function is as follows. Prenyltransferase; part of the gene cluster that mediates the biosynthesis of fusaridione A, a bright yellow trans-fused decalin-containing tetramic acid with antimicrobial activity. The PKS module of fsdS catalyzes the formation of the polyketide unit which is then conjugated to L-tyrosine by the condensation domain of the fsdS NRPS module. Activity of the Dieckmann cyclase domain (RED) results in release of the intermediate fusaridione A. The unstable pyrrolidinedione ring of fusaridione A is opened through a reverse-Dieckmann reaction to afford its ring-opened form. The protein is Prenyltransferase fsdK of Fusarium heterosporum.